The chain runs to 959 residues: Probable transport protein MmpL4 (959 aa).

Helical transmembrane passes span 25 to 45, 205 to 225, 239 to 259, 300 to 320, 333 to 353, 381 to 401, 766 to 786, 790 to 810, 818 to 838, 872 to 892, and 902 to 922; these read FAVPIILVWLAIAVTVSVFIP, VIVILVTLLLVYRSFITVILL, VVALLGHTGLIGLSTFAVNLL, FHVILGSGLTISGATFCLSFA, AVGMLIAVAVALTLGPAVLTV, WPLPILITTCAIAMVGLLALP, WDLVIAGISSLCLIFIIMLII, FVAAAVIVGTVALSLGASFGL, ILGIELHYLVLAMSVIVLLAV, VVTNAGLVFAFTMASMVVSDL, and IGLGLLFDTLIVRSFMMPSIA.

It belongs to the resistance-nodulation-cell division (RND) (TC 2.A.6) family. MmpL subfamily.

The protein localises to the cell membrane. The chain is Probable transport protein MmpL4 (mmpL4) from Mycobacterium leprae (strain TN).